The chain runs to 288 residues: UTP--glucose-1-phosphate uridylyltransferase (288 aa).

Belongs to the UDPGP type 2 family.

It catalyses the reaction alpha-D-glucose 1-phosphate + UTP + H(+) = UDP-alpha-D-glucose + diphosphate. Its pathway is glycolipid metabolism; diglucosyl-diacylglycerol biosynthesis. Its function is as follows. Catalyzes the formation of UDP-glucose from glucose-1-phosphate and UTP. This is an intermediate step in the biosynthesis of diglucosyl-diacylglycerol (Glc2-DAG), i.e. a glycolipid found in the membrane, which is also used as a membrane anchor for lipoteichoic acid (LTA). The sequence is that of UTP--glucose-1-phosphate uridylyltransferase (gtaB) from Staphylococcus haemolyticus (strain JCSC1435).